Here is a 219-residue protein sequence, read N- to C-terminus: Uracil-DNA glycosylase (219 aa).

Asp63 (proton acceptor) is an active-site residue.

This sequence belongs to the uracil-DNA glycosylase (UDG) superfamily. UNG family.

It localises to the cytoplasm. It catalyses the reaction Hydrolyzes single-stranded DNA or mismatched double-stranded DNA and polynucleotides, releasing free uracil.. Excises uracil residues from the DNA which can arise as a result of misincorporation of dUMP residues by DNA polymerase or due to deamination of cytosine. The protein is Uracil-DNA glycosylase of Mesomycoplasma hyopneumoniae (strain 7448) (Mycoplasma hyopneumoniae).